A 376-amino-acid polypeptide reads, in one-letter code: Fibromodulin (376 aa).

The signal sequence occupies residues 1-18 (MQWASILLLRGLCSLSQG). A Pyrrolidone carboxylic acid modification is found at Gln19. Sulfotyrosine occurs at positions 20, 38, 53, 55, 63, and 65. The LRRNT domain maps to 67-105 (APPPPEPRDCPQECDCPPNFPTAMYCDNRNLKYLPFVPS). LRR repeat units follow at residues 106-127 (RMKY…VFDN), 130-143 (GLLW…QITS), 156-176 (HLER…PLPR), 177-198 (SLRE…ALEG), 201-222 (NLTA…MRGL), 224-245 (SLIL…LPSA), 246-266 (LEQL…YFRG), and 269-289 (KLLY…ATNT). N-linked (GlcNAc...) (keratan sulfate) asparagine glycosylation occurs at Asn127. N-linked (GlcNAc...) (keratan sulfate) asparagine glycosylation is present at Asn166. Asn201 carries an N-linked (GlcNAc...) (keratan sulfate) asparagine glycan. Asn291 carries N-linked (GlcNAc...) (keratan sulfate) asparagine glycosylation. LRR repeat units follow at residues 294–315 (SLLE…NTNL) and 316–335 (ENLY…SFCT). An intrachain disulfide couples Cys334 to Cys367. Asn341 is a glycosylation site (N-linked (GlcNAc...) asparagine). Residues 344–367 (KLQVLRLDGNEIKRSAMPVDAPLC) form an LRR 11 repeat.

It belongs to the small leucine-rich proteoglycan (SLRP) family. SLRP class II subfamily. As to quaternary structure, binds to type I and type II collagen. Post-translationally, binds keratan sulfate chains.

Its subcellular location is the secreted. It localises to the extracellular space. The protein resides in the extracellular matrix. Affects the rate of fibrils formation. May have a primary role in collagen fibrillogenesis. This Rattus norvegicus (Rat) protein is Fibromodulin (Fmod).